The sequence spans 174 residues: Interferon gamma (174 aa).

An N-terminal signal peptide occupies residues 1-23 (MHTTRCILALLLCLTQAMSGCYC). Gln24 bears the Pyrrolidone carboxylic acid mark. Residues Asn39 and Asn106 are each glycosylated (N-linked (GlcNAc...) asparagine).

This sequence belongs to the type II (or gamma) interferon family. Homodimer. Interacts with IFNGR1 (via extracellular domain); this interaction promotes IFNGR1 dimerization. As to expression, released primarily from activated T lymphocytes.

It localises to the secreted. Functionally, type II interferon produced by immune cells such as T-cells and NK cells that plays crucial roles in antimicrobial, antiviral, and antitumor responses by activating effector immune cells and enhancing antigen presentation. Primarily signals through the JAK-STAT pathway after interaction with its receptor IFNGR1 to affect gene regulation. Upon IFNG binding, IFNGR1 intracellular domain opens out to allow association of downstream signaling components JAK2, JAK1 and STAT1, leading to STAT1 activation, nuclear translocation and transcription of IFNG-regulated genes. Many of the induced genes are transcription factors such as IRF1 that are able to further drive regulation of a next wave of transcription. Plays a role in class I antigen presentation pathway by inducing a replacement of catalytic proteasome subunits with immunoproteasome subunits. In turn, increases the quantity, quality, and repertoire of peptides for class I MHC loading. Increases the efficiency of peptide generation also by inducing the expression of activator PA28 that associates with the proteasome and alters its proteolytic cleavage preference. Up-regulates as well MHC II complexes on the cell surface by promoting expression of several key molecules such as cathepsins B/CTSB, H/CTSH, and L/CTSL. Participates in the regulation of hematopoietic stem cells during development and under homeostatic conditions by affecting their development, quiescence, and differentiation. This chain is Interferon gamma (IFNG), found in Mesocricetus auratus (Golden hamster).